The sequence spans 510 residues: Secreted RxLR effector protein 24 (510 aa).

An N-terminal signal peptide occupies residues Met-1–Ala-18. A RxLR-dEER motif is present at residues Arg-47–Arg-68.

It belongs to the RxLR effector family.

Its subcellular location is the secreted. It is found in the host nucleus. Its function is as follows. Secreted effector that acts as an elicitor that induces cell death in host plant cells. The polypeptide is Secreted RxLR effector protein 24 (Plasmopara viticola (Downy mildew of grapevine)).